We begin with the raw amino-acid sequence, 353 residues long: Protein RecA (353 aa).

Residue 67–74 participates in ATP binding; the sequence is GPESSGKT. Positions 330 to 353 are disordered; that stretch reads SNPNSTPDFSVDDSEGVAETNEDF. Residues 339–353 show a composition bias toward acidic residues; the sequence is SVDDSEGVAETNEDF.

It belongs to the RecA family.

The protein resides in the cytoplasm. In terms of biological role, can catalyze the hydrolysis of ATP in the presence of single-stranded DNA, the ATP-dependent uptake of single-stranded DNA by duplex DNA, and the ATP-dependent hybridization of homologous single-stranded DNAs. It interacts with LexA causing its activation and leading to its autocatalytic cleavage. In Shigella sonnei, this protein is Protein RecA.